Reading from the N-terminus, the 166-residue chain is Large ribosomal subunit protein bL17 (166 aa).

A disordered region spans residues 122-166; that stretch reads PESAPVKAKQDRSKRVRGSKKTQEGSEKAEVSASAGEAAAVTEEK. The span at 142–151 shows a compositional bias: basic and acidic residues; that stretch reads KTQEGSEKAE. Over residues 152–166 the composition is skewed to low complexity; the sequence is VSASAGEAAAVTEEK.

The protein belongs to the bacterial ribosomal protein bL17 family. In terms of assembly, part of the 50S ribosomal subunit. Contacts protein L32.

The sequence is that of Large ribosomal subunit protein bL17 from Chlorobium phaeobacteroides (strain BS1).